We begin with the raw amino-acid sequence, 260 residues long: Triosephosphate isomerase (260 aa).

11-13 serves as a coordination point for substrate; that stretch reads NWK. The active-site Electrophile is the H103. The Proton acceptor role is filled by E175. Substrate contacts are provided by residues G181, S220, and 241 to 242; that span reads GG.

It belongs to the triosephosphate isomerase family. In terms of assembly, homodimer.

It localises to the cytoplasm. It carries out the reaction D-glyceraldehyde 3-phosphate = dihydroxyacetone phosphate. Its pathway is carbohydrate biosynthesis; gluconeogenesis. It functions in the pathway carbohydrate degradation; glycolysis; D-glyceraldehyde 3-phosphate from glycerone phosphate: step 1/1. In terms of biological role, involved in the gluconeogenesis. Catalyzes stereospecifically the conversion of dihydroxyacetone phosphate (DHAP) to D-glyceraldehyde-3-phosphate (G3P). The protein is Triosephosphate isomerase of Shewanella piezotolerans (strain WP3 / JCM 13877).